Consider the following 761-residue polypeptide: Dipeptidyl-peptidase 4 (761 aa).

An N-terminal signal peptide occupies residues 1-15 (MTLSAWIILVTLAMA). Catalysis depends on charge relay system residues Ser622, Asp706, and His738.

The protein belongs to the peptidase S9C family.

The protein resides in the membrane. In terms of biological role, may be involved in metabolism of dipeptides or may affect host defense mechanisms. The sequence is that of Dipeptidyl-peptidase 4 (DPP) from Giardia intestinalis (Giardia lamblia).